The chain runs to 335 residues: Pro-cathepsin H (335 aa).

A signal peptide spans 1 to 22; the sequence is MWAVLSLLCAGAWLLGPPACGA. The propeptide occupies 23–97; that stretch reads SNLAVSSFEK…DEIRHKYLWS (75 aa). N72 and N101 each carry an N-linked (GlcNAc...) asparagine glycan. 4 cysteine pairs are disulfide-bonded: C102–C327, C138–C181, C172–C214, and C272–C322. Residues 107–115 constitute a propeptide that is removed on maturation; it reads GNYLRGTGP. C141 is an active-site residue. N230 is a glycosylation site (N-linked (GlcNAc...) asparagine). Catalysis depends on residues H281 and N301.

The protein belongs to the peptidase C1 family. Composed of cathepsin H and mini chain; disulfide-linked. Cathepsin H may be split into heavy and light chain. All chains are held together by disulfide bonds.

It is found in the lysosome. The catalysed reaction is Hydrolysis of proteins, acting as an aminopeptidase (notably, cleaving Arg-|-Xaa bonds) as well as an endopeptidase.. Important for the overall degradation of proteins in lysosomes. In Sus scrofa (Pig), this protein is Pro-cathepsin H (CTSH).